Reading from the N-terminus, the 130-residue chain is Fumarate reductase subunit C (130 aa).

3 helical membrane-spanning segments follow: residues 37 to 57, 60 to 80, and 109 to 129; these read VWFS…PAGW, FVGF…LLAA, and VIKA…AVAL.

The protein belongs to the FrdC family. In terms of assembly, part of an enzyme complex containing four subunits: a flavoprotein (FrdA), an iron-sulfur protein (FrdB), and two hydrophobic anchor proteins (FrdC and FrdD).

Its subcellular location is the cell inner membrane. Functionally, two distinct, membrane-bound, FAD-containing enzymes are responsible for the catalysis of fumarate and succinate interconversion; fumarate reductase is used in anaerobic growth, and succinate dehydrogenase is used in aerobic growth. Anchors the catalytic components of the fumarate reductase complex to the cell inner membrane, binds quinones. The protein is Fumarate reductase subunit C of Yersinia enterocolitica serotype O:8 / biotype 1B (strain NCTC 13174 / 8081).